The chain runs to 906 residues: Cadherin-2 (906 aa).

Residues 1–25 (MCRIAGALRTLLPLLAALLQASVEA) form the signal peptide. Positions 26–159 (SGEIALCKTG…HSGHLQRQKR (134 aa)) are excised as a propeptide. Phosphoserine; by FAM20C occurs at positions 96 and 135. Cadherin domains lie at 160 to 267 (DWVI…RPEF), 268 to 382 (LHQV…PPEF), 383 to 497 (TAMT…NPYF), 498 to 603 (APNP…DNAP), and 604 to 714 (QVLP…DVDR). Over 160–724 (DWVIPPINLP…IVGAGLGTGA (565 aa)) the chain is Extracellular. E170 is a Ca(2+) binding site. Residue N190 is glycosylated (N-linked (GlcNAc...) asparagine). 7 residues coordinate Ca(2+): D226, E228, D259, M260, N261, D262, and N263. N273 is a glycosylation site (N-linked (GlcNAc...) asparagine). Residues D293, D295, and N301 each coordinate Ca(2+). Residue N325 is glycosylated (N-linked (GlcNAc...) asparagine). D353 is a binding site for Ca(2+). Residues N402, N572, N651, and N692 are each glycosylated (N-linked (GlcNAc...) asparagine). A helical membrane pass occupies residues 725-745 (IIAILLCIIILLILVLMFVVW). Over 746–906 (MKRRDKERQA…LADMYGGGDD (161 aa)) the chain is Cytoplasmic. Positions 863 to 880 (SGSTAGSLSSLNSSSSGG) are enriched in low complexity. Residues 863-884 (SGSTAGSLSSLNSSSSGGEQDY) form a disordered region.

Homodimer (via extracellular region). Can also form heterodimers with other cadherins (via extracellular region). Dimerization occurs in trans, i.e. with a cadherin chain from another cell. Interacts with CDCP1. Interacts with PCDH8; this complex may also include TAOK2. The interaction with PCDH8 may lead to internalization through TAOK2/p38 MAPK pathway. Identified in a complex containing FGFR4, NCAM1, CDH2, PLCG1, FRS2, SRC, SHC1, GAP43 and CTTN. May interact with OBSCN (via protein kinase domain 2). Interacts with FBXO45. Cleaved by MMP24. Ectodomain cleavage leads to the generation of a soluble 90 kDa N-terminal soluble fragment and a 45 kDa membrane-bound C-terminal fragment 1 (CTF1), which is further cleaved by gamma-secretase into a 35 kDa. Cleavage in neural stem cells by MMP24 affects CDH2-mediated anchorage of neural stem cells to ependymocytes in the adult subependymal zone, leading to modulate neural stem cell quiescence. Post-translationally, may be phosphorylated by OBSCN.

Its subcellular location is the cell membrane. It is found in the sarcolemma. The protein resides in the cell junction. The protein localises to the cell surface. It localises to the desmosome. Its subcellular location is the adherens junction. Calcium-dependent cell adhesion protein; preferentially mediates homotypic cell-cell adhesion by dimerization with a CDH2 chain from another cell. Cadherins may thus contribute to the sorting of heterogeneous cell types. Acts as a regulator of neural stem cells quiescence by mediating anchorage of neural stem cells to ependymocytes in the adult subependymal zone: upon cleavage by MMP24, CDH2-mediated anchorage is affected, leading to modulate neural stem cell quiescence. Plays a role in cell-to-cell junction formation between pancreatic beta cells and neural crest stem (NCS) cells, promoting the formation of processes by NCS cells. Required for proper neurite branching. Required for pre- and postsynaptic organization. CDH2 may be involved in neuronal recognition mechanism. In hippocampal neurons, may regulate dendritic spine density. This Homo sapiens (Human) protein is Cadherin-2 (CDH2).